Reading from the N-terminus, the 317-residue chain is E3 ubiquitin-protein ligase NRDP1 (317 aa).

An RING-type; degenerate zinc finger spans residues 18–57; sequence CPICSGVLEEPVQAPHCEHAFCNACITQWFSQQQTCPVDR. The SIAH-type; degenerate zinc-finger motif lies at 78–138; the sequence is KLQIACDNAV…LPNHNCIKHL (61 aa).

As to quaternary structure, interacts with USP8, ERBB3, PRKN and BIRC6. Interacts with CSF2RB, EPOR, IL3RA, MYD88 and TBK1. Interacts with Clec16a. Autoubiquitinated. Autoubiquitination leads to proteasomal degradation. Deubiquitinated by USP8 to get stabilized which induces apoptosis.

It carries out the reaction S-ubiquitinyl-[E2 ubiquitin-conjugating enzyme]-L-cysteine + [acceptor protein]-L-lysine = [E2 ubiquitin-conjugating enzyme]-L-cysteine + N(6)-ubiquitinyl-[acceptor protein]-L-lysine.. It functions in the pathway protein modification; protein ubiquitination. Its function is as follows. Acts as E3 ubiquitin-protein ligase and regulates the degradation of target proteins. Polyubiquitinates MYD88. Negatively regulates MYD88-dependent production of pro-inflammatory cytokines. Can promote TRIF-dependent production of type I interferon and inhibits infection with vesicular stomatitis virus. Also promotes activation of TBK1 and IRF3. Involved in the ubiquitination of erythropoietin (EPO) and interleukin-3 (IL-3) receptors. Thus, through maintaining basal levels of cytokine receptors, RNF41 is involved in the control of hematopoietic progenitor cell differentiation into myeloerythroid lineages. Contributes to the maintenance of steady-state ERBB3 levels by mediating its growth factor-independent degradation. Involved in the degradation of the inhibitor of apoptosis BIRC6 and thus is an important regulator of cell death by promoting apoptosis. Also acts as a PRKN modifier that accelerates its degradation, resulting in a reduction of PRKN activity, influencing the balance of intracellular redox state. The RNF41-PRKN pathway regulates autophagosome-lysosome fusion during late mitophagy. Mitophagy is a selective form of autophagy necessary for mitochondrial quality control. This chain is E3 ubiquitin-protein ligase NRDP1 (Rnf41), found in Mus musculus (Mouse).